Reading from the N-terminus, the 271-residue chain is Putative glucose-6-phosphate 1-epimerase (271 aa).

Positions 71 and 93 each coordinate substrate. Residue histidine 151 is part of the active site. Aspartate 193 is a binding site for substrate. Glutamate 249 is a catalytic residue.

It belongs to the glucose-6-phosphate 1-epimerase family.

It catalyses the reaction alpha-D-glucose 6-phosphate = beta-D-glucose 6-phosphate. This chain is Putative glucose-6-phosphate 1-epimerase, found in Haemophilus influenzae (strain ATCC 51907 / DSM 11121 / KW20 / Rd).